The chain runs to 302 residues: Pantothenate synthetase (302 aa).

Position 30 to 37 (30 to 37 (MGALHGGH)) interacts with ATP. The Proton donor role is filled by H37. Position 61 (Q61) interacts with (R)-pantoate. Residue Q61 coordinates beta-alanine. Position 147-150 (147-150 (GEKD)) interacts with ATP. Q153 is a (R)-pantoate binding site. ATP contacts are provided by residues V176 and 184 to 187 (KSSR).

Belongs to the pantothenate synthetase family. As to quaternary structure, homodimer.

It is found in the cytoplasm. It catalyses the reaction (R)-pantoate + beta-alanine + ATP = (R)-pantothenate + AMP + diphosphate + H(+). Its pathway is cofactor biosynthesis; (R)-pantothenate biosynthesis; (R)-pantothenate from (R)-pantoate and beta-alanine: step 1/1. Its function is as follows. Catalyzes the condensation of pantoate with beta-alanine in an ATP-dependent reaction via a pantoyl-adenylate intermediate. This Shouchella clausii (strain KSM-K16) (Alkalihalobacillus clausii) protein is Pantothenate synthetase.